The chain runs to 294 residues: ADP-ribosyl-[dinitrogen reductase] glycohydrolase (294 aa).

Residues Asn-100–Cys-102, Glu-121, His-158, and Tyr-212 each bind ADP-D-ribose. The Mn(2+) site is built by Asp-243, Asp-245, and Thr-246.

This sequence belongs to the ADP-ribosylglycohydrolase family. In terms of assembly, monomer. Requires Mn(2+) as cofactor.

It localises to the cytoplasm. It carries out the reaction N(omega)-alpha-(ADP-D-ribosyl)-L-arginyl-[dinitrogen reductase] + H2O = L-arginyl-[dinitrogen reductase] + ADP-D-ribose. Functionally, involved in the regulation of nitrogen fixation activity by the reversible ADP-ribosylation of one subunit of the homodimeric dinitrogenase reductase component of the nitrogenase enzyme complex. The ADP-ribosyltransferase (DraT) transfers the ADP-ribose group from NAD to dinitrogenase reductase. The ADP-ribose group is removed through the action of the ADP-ribosylglycohydrolase (DraG, this entry). The sequence is that of ADP-ribosyl-[dinitrogen reductase] glycohydrolase from Rhodospirillum rubrum.